Reading from the N-terminus, the 782-residue chain is Phosphate transporter PHO1 (782 aa).

Over 1–386 (MVKFSKELEA…HQTKDSHMVT (386 aa)) the chain is Cytoplasmic. The 333-residue stretch at 2–334 (VKFSKELEAQ…GQNASSTYLK (333 aa)) folds into the SPX domain. Positions 165 to 202 (KKRNLSGSNSHRSFSSSVRNSDFSAGSPGELSEIQSET) are disordered. Low complexity predominate over residues 170 to 188 (SGSNSHRSFSSSVRNSDFS). The tract at residues 315 to 322 (KIMKKFDK) is important for inositol polyphosphate binding. Residues 387–407 (FFVGLFTGCFISLFVIYIILA) traverse the membrane as a helical segment. The Lumenal segment spans residues 408-423 (HLSGIFTSSDQVSYLE). A helical transmembrane segment spans residues 424-444 (TVYPVFSVFALLSLHMFMYGC). The Cytoplasmic segment spans residues 445–473 (NLYMWKNTRINYTFIFEFAPNTALRYRDA). The helical transmembrane segment at 474-494 (FLMGTTFMTSVVAAMVIHLIL) threads the bilayer. The Lumenal portion of the chain corresponds to 495-506 (RASGFSASQVDT). Residues 507 to 527 (IPGILLLIFICVLICPFNTFY) traverse the membrane as a helical segment. Residues 528–593 (RPTRFCFIRI…THEYNTCKNG (66 aa)) are Cytoplasmic-facing. In terms of domain architecture, EXS spans 591 to 782 (KNGRYYREFA…LPFLDRDSDG (192 aa)). A helical membrane pass occupies residues 594 to 614 (RYYREFAYLISFLPYFWRAMQ). The Lumenal portion of the chain corresponds to 615 to 619 (CVRRW). The helical transmembrane segment at 620–639 (WDESNPDHLINMGKYVSAMV) threads the bilayer. The Cytoplasmic portion of the chain corresponds to 640–782 (AAGVRITYAR…LPFLDRDSDG (143 aa)).

It belongs to the SYG1 (TC 2.A.94) family. In terms of assembly, interacts with PHO2. Post-translationally, PHO1 degradation is PHO2 dependent and involves multivesicular body-mediated vacuolar proteolysis. In terms of tissue distribution, predominantly in roots, but also weak expression in the lower part of the hypocotyl. In the stellar cells, including the pericycle and xylem parenchyma cells, but not in the cortical or epidermal cells. Expressed in guard cells.

The protein localises to the golgi apparatus membrane. It localises to the golgi apparatus. It is found in the trans-Golgi network membrane. Its subcellular location is the endoplasmic reticulum membrane. Functionally, inositol polyphosphate sensor that associates with transcription factors to regulate inorganic phosphate (Pi) starvation responses. Probably acts by binding inositol polyphosphate via its SPX domain. Acts as a Pi exporter, mediating efflux of Pi out of cells. Transfers Pi from the epidermal and cortical cells to the root xylem vessels. Involved in the transfer of Pi from roots to shoots. Involved in abscisic acid (ABA) induction of stomatal closure and ABA repression of stomatal opening. In Arabidopsis thaliana (Mouse-ear cress), this protein is Phosphate transporter PHO1.